The following is a 233-amino-acid chain: Purine nucleoside phosphorylase DeoD-type (233 aa).

His4 is an a purine D-ribonucleoside binding site. Residues Gly20, Arg24, Arg43, and 87 to 90 (RIGT) each bind phosphate. Residues 179–181 (EME) and 203–204 (SD) contribute to the a purine D-ribonucleoside site. Asp204 acts as the Proton donor in catalysis.

It belongs to the PNP/UDP phosphorylase family. Homohexamer; trimer of homodimers.

The enzyme catalyses a purine D-ribonucleoside + phosphate = a purine nucleobase + alpha-D-ribose 1-phosphate. It catalyses the reaction a purine 2'-deoxy-D-ribonucleoside + phosphate = a purine nucleobase + 2-deoxy-alpha-D-ribose 1-phosphate. Functionally, catalyzes the reversible phosphorolytic breakdown of the N-glycosidic bond in the beta-(deoxy)ribonucleoside molecules, with the formation of the corresponding free purine bases and pentose-1-phosphate. This is Purine nucleoside phosphorylase DeoD-type from Helicobacter pylori (strain G27).